A 376-amino-acid chain; its full sequence is Flagellar P-ring protein 2 (376 aa).

The N-terminal stretch at methionine 1 to alanine 19 is a signal peptide.

The protein belongs to the FlgI family. In terms of assembly, the basal body constitutes a major portion of the flagellar organelle and consists of four rings (L,P,S, and M) mounted on a central rod.

It localises to the periplasm. Its subcellular location is the bacterial flagellum basal body. Assembles around the rod to form the L-ring and probably protects the motor/basal body from shearing forces during rotation. This chain is Flagellar P-ring protein 2, found in Bradyrhizobium diazoefficiens (strain JCM 10833 / BCRC 13528 / IAM 13628 / NBRC 14792 / USDA 110).